The chain runs to 360 residues: Photosystem II protein D1 (360 aa).

3 helical membrane-spanning segments follow: residues 29–46, 118–133, and 142–156; these read YIGWFGVLMIPCLLTATT, HFLLGVAAYMGREWEL, and WICVAFSAPVAAATA. H118 contributes to the chlorophyll a binding site. Y126 contacts pheophytin a. Residues D170 and E189 each coordinate [CaMn4O5] cluster. Residues 197 to 218 form a helical membrane-spanning segment; sequence FHMAGVAGVFGGALFSAMHGSL. Residue H198 participates in chlorophyll a binding. A quinone contacts are provided by residues H215 and 264–265; that span reads SF. H215 is a Fe cation binding site. A Fe cation-binding site is contributed by H272. A helical transmembrane segment spans residues 274–288; the sequence is FLGLWPVVGIWLTSI. [CaMn4O5] cluster-binding residues include H332, E333, D342, and A344. The propeptide occupies 345–360; sequence DNSLLPVASSSPSINS.

Belongs to the reaction center PufL/M/PsbA/D family. PSII is composed of 1 copy each of membrane proteins PsbA, PsbB, PsbC, PsbD, PsbE, PsbF, PsbH, PsbI, PsbJ, PsbK, PsbL, PsbM, PsbT, PsbY, PsbZ, Psb30/Ycf12, at least 3 peripheral proteins of the oxygen-evolving complex and a large number of cofactors. It forms dimeric complexes. Requires The D1/D2 heterodimer binds P680, chlorophylls that are the primary electron donor of PSII, and subsequent electron acceptors. It shares a non-heme iron and each subunit binds pheophytin, quinone, additional chlorophylls, carotenoids and lipids. D1 provides most of the ligands for the Mn4-Ca-O5 cluster of the oxygen-evolving complex (OEC). There is also a Cl(-1) ion associated with D1 and D2, which is required for oxygen evolution. The PSII complex binds additional chlorophylls, carotenoids and specific lipids. as cofactor. In terms of processing, tyr-161 forms a radical intermediate that is referred to as redox-active TyrZ, YZ or Y-Z.

It is found in the plastid. The protein localises to the chloroplast thylakoid membrane. It catalyses the reaction 2 a plastoquinone + 4 hnu + 2 H2O = 2 a plastoquinol + O2. Functionally, photosystem II (PSII) is a light-driven water:plastoquinone oxidoreductase that uses light energy to abstract electrons from H(2)O, generating O(2) and a proton gradient subsequently used for ATP formation. It consists of a core antenna complex that captures photons, and an electron transfer chain that converts photonic excitation into a charge separation. The D1/D2 (PsbA/PsbD) reaction center heterodimer binds P680, the primary electron donor of PSII as well as several subsequent electron acceptors. This Cyanidium caldarium (Red alga) protein is Photosystem II protein D1.